We begin with the raw amino-acid sequence, 158 residues long: Large ribosomal subunit protein uL11 (158 aa).

The protein belongs to the universal ribosomal protein uL11 family. Part of the ribosomal stalk of the 50S ribosomal subunit. Interacts with L10 and the large rRNA to form the base of the stalk. L10 forms an elongated spine to which L12 dimers bind in a sequential fashion forming a multimeric L10(L12)X complex.

Forms part of the ribosomal stalk which helps the ribosome interact with GTP-bound translation factors. In Methanoculleus marisnigri (strain ATCC 35101 / DSM 1498 / JR1), this protein is Large ribosomal subunit protein uL11.